Here is a 322-residue protein sequence, read N- to C-terminus: Probable cell division protein WhiA (322 aa).

The segment at residues 279-312 is a DNA-binding region (H-T-H motif); the sequence is SLKELGELWTPPVGKSGVNHRIRKIERLAEKLRS.

The protein belongs to the WhiA family.

Functionally, involved in cell division and chromosome segregation. In Desulforamulus reducens (strain ATCC BAA-1160 / DSM 100696 / MI-1) (Desulfotomaculum reducens), this protein is Probable cell division protein WhiA.